We begin with the raw amino-acid sequence, 391 residues long: 3-ketoacyl-CoA thiolase (391 aa).

Cysteine 95 acts as the Acyl-thioester intermediate in catalysis. Catalysis depends on proton acceptor residues histidine 347 and cysteine 377.

This sequence belongs to the thiolase-like superfamily. Thiolase family. Heterotetramer of two alpha chains (FadB) and two beta chains (FadA).

The protein resides in the cytoplasm. It carries out the reaction an acyl-CoA + acetyl-CoA = a 3-oxoacyl-CoA + CoA. It participates in lipid metabolism; fatty acid beta-oxidation. Functionally, catalyzes the final step of fatty acid oxidation in which acetyl-CoA is released and the CoA ester of a fatty acid two carbons shorter is formed. The protein is 3-ketoacyl-CoA thiolase of Pseudomonas savastanoi pv. phaseolicola (strain 1448A / Race 6) (Pseudomonas syringae pv. phaseolicola (strain 1448A / Race 6)).